The primary structure comprises 115 residues: U3-lycotoxin-Ls1k (115 aa).

The N-terminal stretch at 1–20 is a signal peptide; that stretch reads MKFVLLFGVLLVTLFSYSSA. The propeptide occupies 21-44; sequence EMLDDFDQADEDELLSLIEKEEAR. Cystine bridges form between C48-C63, C55-C72, C62-C87, and C74-C85.

It belongs to the neurotoxin 19 (CSTX) family. 01 subfamily. Expressed by the venom gland.

It localises to the secreted. This Lycosa singoriensis (Wolf spider) protein is U3-lycotoxin-Ls1k.